Reading from the N-terminus, the 261-residue chain is MRVALGIEYDGSRYYGWQRQLDVDSVQGQLEKALSKVANEPITVQCAGRTDTGVHGTGQVVHFDTNAIRKETAWTLGVNVNLPDDIAVRWVKVVDEEFHARFSATARRYRYMIYNHQLRPGILRSGVSHYRGNIDEDKMHQAAQLFVGEHDFTSFRALQCQSKTPFREIHEVNVTRQGMYICVDIKANAFLHHMVRNIVGTLLEIGKGNQPKEWVNTLLALKDRSKAAATAQPNGLYLVDVTYPEHFQLPKLALGPLFMLD.

Asp-51 serves as the catalytic Nucleophile. Tyr-109 lines the substrate pocket.

Belongs to the tRNA pseudouridine synthase TruA family. In terms of assembly, homodimer.

It catalyses the reaction uridine(38/39/40) in tRNA = pseudouridine(38/39/40) in tRNA. Formation of pseudouridine at positions 38, 39 and 40 in the anticodon stem and loop of transfer RNAs. This Shewanella piezotolerans (strain WP3 / JCM 13877) protein is tRNA pseudouridine synthase A.